A 342-amino-acid polypeptide reads, in one-letter code: Cathepsin B-like cysteine proteinase (342 aa).

A signal peptide spans 1-17 (MLKIAVYIVSLFTFLEA). Positions 18–89 (HVTTRNNQRI…TVDHHDLNVE (72 aa)) are cleaved as a propeptide — activation peptide. 6 cysteine pairs are disulfide-bonded: cysteine 103-cysteine 132, cysteine 115-cysteine 159, cysteine 151-cysteine 217, cysteine 152-cysteine 155, cysteine 188-cysteine 221, and cysteine 196-cysteine 207. Residue cysteine 118 is part of the active site. Residues histidine 288 and asparagine 308 contribute to the active site.

It belongs to the peptidase C1 family. Intestine (gut).

In terms of biological role, thiol protease. Has a role as a digestive enzyme. This chain is Cathepsin B-like cysteine proteinase (CATB), found in Schistosoma japonicum (Blood fluke).